A 284-amino-acid chain; its full sequence is Formamidopyrimidine-DNA glycosylase (284 aa).

Catalysis depends on Pro-2, which acts as the Schiff-base intermediate with DNA. The Proton donor role is filled by Glu-3. Lys-58 serves as the catalytic Proton donor; for beta-elimination activity. Residues His-101, Arg-120, and Arg-163 each contribute to the DNA site. The segment at 248–284 (RVYDRENAPCVTAGCPDVVRRVVQSGRSSFYCPSCQR) adopts an FPG-type zinc-finger fold. The active-site Proton donor; for delta-elimination activity is Arg-274.

It belongs to the FPG family. Monomer. Zn(2+) serves as cofactor.

It carries out the reaction Hydrolysis of DNA containing ring-opened 7-methylguanine residues, releasing 2,6-diamino-4-hydroxy-5-(N-methyl)formamidopyrimidine.. The enzyme catalyses 2'-deoxyribonucleotide-(2'-deoxyribose 5'-phosphate)-2'-deoxyribonucleotide-DNA = a 3'-end 2'-deoxyribonucleotide-(2,3-dehydro-2,3-deoxyribose 5'-phosphate)-DNA + a 5'-end 5'-phospho-2'-deoxyribonucleoside-DNA + H(+). Its function is as follows. Involved in base excision repair of DNA damaged by oxidation or by mutagenic agents. Acts as a DNA glycosylase that recognizes and removes damaged bases. Has a preference for oxidized purines, such as 7,8-dihydro-8-oxoguanine (8-oxoG). Has AP (apurinic/apyrimidinic) lyase activity and introduces nicks in the DNA strand. Cleaves the DNA backbone by beta-delta elimination to generate a single-strand break at the site of the removed base with both 3'- and 5'-phosphates. The chain is Formamidopyrimidine-DNA glycosylase from Dinoroseobacter shibae (strain DSM 16493 / NCIMB 14021 / DFL 12).